The following is a 291-amino-acid chain: Verruculogen synthase (291 aa).

The protein belongs to the PhyH family. In terms of assembly, homodimer. The cofactor is Fe cation.

It catalyses the reaction fumitremorgin B + 2-oxoglutarate + AH2 + 2 O2 = verruculogen + succinate + A + CO2 + H2O. It participates in mycotoxin biosynthesis. Functionally, verruculogen synthase; part of the gene cluster that mediates the biosynthesis of fumitremorgins, indole alkaloids that carry not only intriguing chemical structures, but also interesting biological and pharmacological activities. The biosynthesis of fumitremorgin-type alkaloids begins by condensation of the two amino acids L-tryptophan and L-proline to brevianamide F, catalyzed by the non-ribosomal peptide synthetase ftmPS/ftmA. Brevianamide F is then prenylated by the prenyltransferase ftmPT1/ftmB in the presence of dimethylallyl diphosphate, resulting in the formation of tryprostatin B. The three cytochrome P450 monooxygenases, ftmP450-1/ftmC, ftmP450-2/ftmE and ftmP450-3/FtmG, are responsible for the conversion of tryprostatin B to 6-hydroxytryprostatin B, tryprostatin A to fumitremorgin C and fumitremorgin C to 12,13-dihydroxyfumitremorgin C, respectively. The putative methyltransferase ftmMT/ftmD is expected for the conversion of 6-hydroxytryprostatin B to tryprostatin A. FtmPT2/FtmH catalyzes the prenylation of 12,13-dihydroxyfumitre-morgin C in the presence of dimethylallyl diphosphate, resulting in the formation of fumitremorgin B. Fumitremorgin B is further converted to verruculogen by ftmOx1/ftmF via the insertion of an endoperoxide bond between the two prenyl moieties. Finally, verruculogen is further converted to fumitremorgin A by the verruculogen prenyltransferase ftmPT3. This chain is Verruculogen synthase, found in Neosartorya fischeri (strain ATCC 1020 / DSM 3700 / CBS 544.65 / FGSC A1164 / JCM 1740 / NRRL 181 / WB 181) (Aspergillus fischerianus).